The chain runs to 512 residues: MGELTEFQKKRLENIKRNNDLLKKLNLNNVSSQIKREAGVEDEHLDRKRKKKAGSAKKAVKKEPKPAAIPTRRSRRLRGENVDGNGIPNVNDNQLLKMGQSDSTPELEAIDELKNTALSGDVKLSDLIKSENEEELLDKFKSFANKNFSSGDFFKELQQQQVPTPEIKQLQEDFDLKLYDIFQPNEIKLTAERISATFFHPSVDKKLVICGDTAGNVGLWNVRETQPEDELEEPDITKVKLFTKNVGRIDTYATDSSRLLAASYDGYLRSINLQDMNSEEILVLKNEYDDPLGISDFQFNYNDPNVLFMTTLSGEFTTFDVRTKPTEINLKRLSDKKIGSFSINPKRPYEIATGSLDRTLKIWDTRKIVNKPEWSQYEDFASHEIVATYDSRLSVSAVSYSPMDETLVCNGYDDTIRLFDVSGTLPEDLQPKLTLKHNCQTGRWTSILKARFKLNMDVFAIANMKRAIDIYTSSGVQLAHLPTATVPAVISWHPTQNWVVGGNSSGKAFLFT.

The interval 32–96 (SQIKREAGVE…IPNVNDNQLL (65 aa)) is disordered. The span at 34–46 (IKREAGVEDEHLD) shows a compositional bias: basic and acidic residues. A compositionally biased stretch (basic residues) spans 47-60 (RKRKKKAGSAKKAV). WD repeat units follow at residues 189–230 (LTAE…PEDE), 241–281 (LFTK…SEEI), 289–329 (DDPL…TEIN), 333–373 (LSDK…NKPE), 390–429 (DSRL…PEDL), 442–481 (GRWT…LAHL), and 482–512 (PTAT…FLFT).

This sequence belongs to the WD repeat DDB2/WDR76 family.

In terms of biological role, DNA-binding protein that binds to both single- and double-stranded DNA. Binds preferentially to UV-damaged DNA. May be involved in DNA-metabolic processes. The protein is DNA damage-binding protein CMR1 of Kluyveromyces lactis (strain ATCC 8585 / CBS 2359 / DSM 70799 / NBRC 1267 / NRRL Y-1140 / WM37) (Yeast).